The chain runs to 354 residues: NADH-quinone oxidoreductase subunit H (354 aa).

8 consecutive transmembrane segments (helical) span residues leucine 23–tryptophan 43, tyrosine 91–phenylalanine 111, leucine 124–alanine 144, isoleucine 162–leucine 182, isoleucine 203–valine 223, glycine 250–methionine 270, isoleucine 291–leucine 311, and isoleucine 330–tryptophan 350.

This sequence belongs to the complex I subunit 1 family. NDH-1 is composed of 14 different subunits. Subunits NuoA, H, J, K, L, M, N constitute the membrane sector of the complex.

The protein resides in the cell inner membrane. It catalyses the reaction a quinone + NADH + 5 H(+)(in) = a quinol + NAD(+) + 4 H(+)(out). In terms of biological role, NDH-1 shuttles electrons from NADH, via FMN and iron-sulfur (Fe-S) centers, to quinones in the respiratory chain. The immediate electron acceptor for the enzyme in this species is believed to be ubiquinone. Couples the redox reaction to proton translocation (for every two electrons transferred, four hydrogen ions are translocated across the cytoplasmic membrane), and thus conserves the redox energy in a proton gradient. This subunit may bind ubiquinone. The chain is NADH-quinone oxidoreductase subunit H from Ralstonia nicotianae (strain ATCC BAA-1114 / GMI1000) (Ralstonia solanacearum).